Reading from the N-terminus, the 191-residue chain is UPF0149 protein VC_2476 (191 aa).

It belongs to the UPF0149 family.

This Vibrio cholerae serotype O1 (strain ATCC 39315 / El Tor Inaba N16961) protein is UPF0149 protein VC_2476.